Here is a 429-residue protein sequence, read N- to C-terminus: Glutamate-1-semialdehyde 2,1-aminomutase 2 (429 aa).

Residue K268 is modified to N6-(pyridoxal phosphate)lysine.

It belongs to the class-III pyridoxal-phosphate-dependent aminotransferase family. HemL subfamily. Homodimer. Requires pyridoxal 5'-phosphate as cofactor.

The protein resides in the cytoplasm. It carries out the reaction (S)-4-amino-5-oxopentanoate = 5-aminolevulinate. The protein operates within porphyrin-containing compound metabolism; protoporphyrin-IX biosynthesis; 5-aminolevulinate from L-glutamyl-tRNA(Glu): step 2/2. This chain is Glutamate-1-semialdehyde 2,1-aminomutase 2, found in Geobacillus thermodenitrificans (strain NG80-2).